A 429-amino-acid polypeptide reads, in one-letter code: tRNA-2-methylthio-N(6)-dimethylallyladenosine synthase (429 aa).

In terms of domain architecture, MTTase N-terminal spans 2-115 (KLLYLQTLGC…ISEAVKTPKF (114 aa)). [4Fe-4S] cluster-binding residues include C11, C46, C78, C147, C151, and C154. Residues 133 to 365 (RGSPYKAFVN…QSRHNEILDE (233 aa)) form the Radical SAM core domain. The TRAM domain maps to 368–429 (KNQVGKIFDV…RMVLYGKITA (62 aa)).

The protein belongs to the methylthiotransferase family. MiaB subfamily. In terms of assembly, monomer. The cofactor is [4Fe-4S] cluster.

The protein localises to the cytoplasm. It carries out the reaction N(6)-dimethylallyladenosine(37) in tRNA + (sulfur carrier)-SH + AH2 + 2 S-adenosyl-L-methionine = 2-methylsulfanyl-N(6)-dimethylallyladenosine(37) in tRNA + (sulfur carrier)-H + 5'-deoxyadenosine + L-methionine + A + S-adenosyl-L-homocysteine + 2 H(+). In terms of biological role, catalyzes the methylthiolation of N6-(dimethylallyl)adenosine (i(6)A), leading to the formation of 2-methylthio-N6-(dimethylallyl)adenosine (ms(2)i(6)A) at position 37 in tRNAs that read codons beginning with uridine. This chain is tRNA-2-methylthio-N(6)-dimethylallyladenosine synthase, found in Campylobacter hominis (strain ATCC BAA-381 / DSM 21671 / CCUG 45161 / LMG 19568 / NCTC 13146 / CH001A).